The chain runs to 328 residues: DhaKLM operon coactivator DhaQ (328 aa).

The DhaK domain maps to 6-328 (STNEIPEEML…LNVPTGAFAW (323 aa)). Residue H215 is modified to Tele-(1,2,3-trihydroxypropan-2-yl)histidine.

In terms of assembly, homodimer. Interacts with a homodimer of DhaS.

Functionally, coactivator for the transcription factor DhaS. The heterotetramer formed by DhaQ and DhaS functions as a transcriptional regulator. Activated by covalent binding of dihydroxyacetone to DhaQ. The complex activates the dhaKLM operon. The sequence is that of DhaKLM operon coactivator DhaQ (dhaQ) from Lactococcus lactis subsp. lactis (strain IL1403) (Streptococcus lactis).